The following is a 213-amino-acid chain: Ion-translocating oxidoreductase complex subunit A (213 aa).

At 1 to 24 (MLLLWQSRIMPGSEANIYITMTEY) the chain is on the periplasmic side. Residues 25–45 (LLLLIGTVLVNNFVLVKFLGL) form a helical membrane-spanning segment. At 46-58 (CPFMGVSKKLETA) the chain is on the cytoplasmic side. The helical transmembrane segment at 59 to 79 (IGMGLATTFVLTLASVCAYLV) threads the bilayer. Residues 80–86 (ESYVLRP) lie on the Periplasmic side of the membrane. Residues 87-107 (LGIEYLRTMSFILVIAVVVQF) form a helical membrane-spanning segment. At 108–121 (TEMVVHKTSPTLYR) the chain is on the cytoplasmic side. Residues 122–142 (LLGIFLPLITTNCAVLGVALL) traverse the membrane as a helical segment. The Periplasmic portion of the chain corresponds to 143–153 (NINENHNFIQS). The helical transmembrane segment at 154-174 (IIYGFGAAVGFSLVLILFASM) threads the bilayer. At 175 to 190 (RERIHVADVPAPFKGA) the chain is on the cytoplasmic side. A helical transmembrane segment spans residues 191–211 (SIAMITAGLMSLAFMGFTGLV). Residues 212-213 (KL) are Periplasmic-facing.

The protein belongs to the NqrDE/RnfAE family. As to quaternary structure, the complex is composed of six subunits: RnfA, RnfB, RnfC, RnfD, RnfE and RnfG.

It is found in the cell inner membrane. Part of a membrane-bound complex that couples electron transfer with translocation of ions across the membrane. This is Ion-translocating oxidoreductase complex subunit A from Vibrio cholerae serotype O1 (strain ATCC 39541 / Classical Ogawa 395 / O395).